The primary structure comprises 147 residues: VDWTDAERAAIKALWGKIDVGEIGPQALSRLLIVYPWTQRHFKGFGNISTNAAILGNAKVAEHGKTVMGGLDRAVQNMDNIKNVYKQLSIKHSEKIHVDPDNFRLLGEIITMCVGAKFGPSAFTPEIHEAWQKFLAVVVSALGRQYH.

Residues 2 to 147 (DWTDAERAAI…VVSALGRQYH (146 aa)) form the Globin domain. Residues H63 and H92 each contribute to the heme b site.

The protein belongs to the globin family. As to quaternary structure, heterotetramer of two alpha chains and two beta chains. Red blood cells.

In terms of biological role, involved in oxygen transport from gills to the various peripheral tissues. This is Hemoglobin subunit beta (hbb) from Leiostomus xanthurus (Spot).